A 156-amino-acid chain; its full sequence is Small ribosomal subunit protein uS7 (156 aa).

Belongs to the universal ribosomal protein uS7 family. As to quaternary structure, part of the 30S ribosomal subunit. Contacts proteins S9 and S11.

Its function is as follows. One of the primary rRNA binding proteins, it binds directly to 16S rRNA where it nucleates assembly of the head domain of the 30S subunit. Is located at the subunit interface close to the decoding center, probably blocks exit of the E-site tRNA. This Geobacter sulfurreducens (strain ATCC 51573 / DSM 12127 / PCA) protein is Small ribosomal subunit protein uS7.